The following is a 639-amino-acid chain: Exocyst complex component EXO70E2 (639 aa).

It belongs to the EXO70 family. In terms of assembly, component of the exocyst complex and of the exocyst-positive organelle (EXPO). Interacts with SEC6, SEC10A and SEC10B. As to expression, expressed in roots, in the root-hair zone, both in root hair and nonhair cells.

The protein resides in the secreted. It is found in the extracellular exosome. Its subcellular location is the cell membrane. It localises to the cytoplasm. The protein localises to the endomembrane system. Its function is as follows. Influences the subcellular localization patterns of other exocyst complex proteins (e.g. SEC5A, SEC15A, SEC15B and EXO84B) leading to their recruitment to exocyst, well-defined large punctate structures throughout the cytosol. Essential component for the formation and the recruitment of exocyst subunits to the exocyst-positive organelle (EXPO), a secreted double membrane structure also called extracellular exosome, that acts as a sequester for cytosolic proteins to release them into the apoplast. This is Exocyst complex component EXO70E2 from Arabidopsis thaliana (Mouse-ear cress).